The following is a 242-amino-acid chain: Uridylate kinase (242 aa).

An ATP-binding site is contributed by 16-19 (KVSG). Residue Gly-58 participates in UMP binding. ATP contacts are provided by Gly-59 and Arg-63. Residues Asp-78 and 139–146 (TGNPFCTT) contribute to the UMP site. 4 residues coordinate ATP: Thr-166, Gln-167, Tyr-172, and Asp-175.

This sequence belongs to the UMP kinase family. As to quaternary structure, homohexamer.

The protein localises to the cytoplasm. The catalysed reaction is UMP + ATP = UDP + ADP. It participates in pyrimidine metabolism; CTP biosynthesis via de novo pathway; UDP from UMP (UMPK route): step 1/1. Inhibited by UTP. In terms of biological role, catalyzes the reversible phosphorylation of UMP to UDP. This chain is Uridylate kinase, found in Rickettsia felis (strain ATCC VR-1525 / URRWXCal2) (Rickettsia azadi).